The primary structure comprises 394 residues: L-lactate 2-monooxygenase (394 aa).

The FMN hydroxy acid dehydrogenase domain occupies 19-394; it reads VAPTLPMSYA…LTIDALRPTR (376 aa). Y45 is an a 2-oxocarboxylate binding site. FMN contacts are provided by residues 98-100, S129, and Q151; that span reads PIG. Residue Y153 coordinates a 2-oxocarboxylate. Residue T179 participates in FMN binding. A 2-oxocarboxylate is bound at residue R188. FMN is bound at residue K267. The active-site Proton acceptor is H291. A 2-oxocarboxylate is bound at residue R294. FMN-binding positions include 321–325 and R345; that span reads DSGIR.

Belongs to the FMN-dependent alpha-hydroxy acid dehydrogenase family. Homotetramer. FMN serves as cofactor.

It carries out the reaction (S)-lactate + O2 = acetate + CO2 + H2O. Functionally, catalyzes the oxidative decarboxylation of (S)-lactate (L-lactate) to acetate and carbon dioxide. Its physiological role remains unknown. This Mycolicibacterium smegmatis (Mycobacterium smegmatis) protein is L-lactate 2-monooxygenase.